Reading from the N-terminus, the 208-residue chain is FMN-dependent NADH:quinone oxidoreductase 3 (208 aa).

The protein belongs to the azoreductase type 1 family. Homodimer. It depends on FMN as a cofactor.

It carries out the reaction 2 a quinone + NADH + H(+) = 2 a 1,4-benzosemiquinone + NAD(+). The enzyme catalyses N,N-dimethyl-1,4-phenylenediamine + anthranilate + 2 NAD(+) = 2-(4-dimethylaminophenyl)diazenylbenzoate + 2 NADH + 2 H(+). Quinone reductase that provides resistance to thiol-specific stress caused by electrophilic quinones. Its function is as follows. Also exhibits azoreductase activity. Catalyzes the reductive cleavage of the azo bond in aromatic azo compounds to the corresponding amines. The polypeptide is FMN-dependent NADH:quinone oxidoreductase 3 (Bacillus cereus (strain ATCC 14579 / DSM 31 / CCUG 7414 / JCM 2152 / NBRC 15305 / NCIMB 9373 / NCTC 2599 / NRRL B-3711)).